We begin with the raw amino-acid sequence, 868 residues long: Leucine--tRNA ligase (868 aa).

Positions 42-52 (PYPSGKLHMGH) match the 'HIGH' region motif. The 'KMSKS' region signature appears at 627 to 631 (KMSKS). Lys-630 is an ATP binding site.

It belongs to the class-I aminoacyl-tRNA synthetase family.

It localises to the cytoplasm. It catalyses the reaction tRNA(Leu) + L-leucine + ATP = L-leucyl-tRNA(Leu) + AMP + diphosphate. The protein is Leucine--tRNA ligase of Pseudomonas syringae pv. tomato (strain ATCC BAA-871 / DC3000).